The sequence spans 98 residues: MTEKLSTETRGPLLEPLFASGWEMVEGRDAIKKTFVFDNFVDAFGWMTRVAIWAEKWNHHPEWDNVYKTVNVVLTTHDVGGLSTLDAKLARKMDSLAG.

It belongs to the pterin-4-alpha-carbinolamine dehydratase family.

It catalyses the reaction (4aS,6R)-4a-hydroxy-L-erythro-5,6,7,8-tetrahydrobiopterin = (6R)-L-erythro-6,7-dihydrobiopterin + H2O. The chain is Putative pterin-4-alpha-carbinolamine dehydratase from Roseobacter denitrificans (strain ATCC 33942 / OCh 114) (Erythrobacter sp. (strain OCh 114)).